The primary structure comprises 98 residues: NADH-ubiquinone oxidoreductase chain 4L (98 aa).

3 helical membrane-spanning segments follow: residues 1–21 (MSMV…GLLM), 29–49 (SLLC…ITIM), and 61–81 (IILL…LVMI).

Belongs to the complex I subunit 4L family. Core subunit of respiratory chain NADH dehydrogenase (Complex I) which is composed of 45 different subunits.

The protein localises to the mitochondrion inner membrane. The catalysed reaction is a ubiquinone + NADH + 5 H(+)(in) = a ubiquinol + NAD(+) + 4 H(+)(out). Its function is as follows. Core subunit of the mitochondrial membrane respiratory chain NADH dehydrogenase (Complex I) which catalyzes electron transfer from NADH through the respiratory chain, using ubiquinone as an electron acceptor. Part of the enzyme membrane arm which is embedded in the lipid bilayer and involved in proton translocation. The chain is NADH-ubiquinone oxidoreductase chain 4L (MT-ND4L) from Procyon lotor (Raccoon).